Consider the following 235-residue polypeptide: Adenosine 5'-phosphosulfate reductase (235 aa).

[4Fe-4S] cluster-binding residues include C121, C122, C204, and C207. The active-site Nucleophile; cysteine thiosulfonate intermediate is C230.

Belongs to the PAPS reductase family. CysH subfamily. Requires [4Fe-4S] cluster as cofactor.

It is found in the cytoplasm. It carries out the reaction [thioredoxin]-disulfide + sulfite + AMP + 2 H(+) = adenosine 5'-phosphosulfate + [thioredoxin]-dithiol. It functions in the pathway sulfur metabolism; hydrogen sulfide biosynthesis; sulfite from sulfate. In terms of biological role, catalyzes the formation of sulfite from adenosine 5'-phosphosulfate (APS) using thioredoxin as an electron donor. The protein is Adenosine 5'-phosphosulfate reductase of Geobacillus kaustophilus (strain HTA426).